We begin with the raw amino-acid sequence, 333 residues long: COMPASS-like H3K4 histone methylase component WDR5B (333 aa).

WD repeat units lie at residues 1-40, 41-80, 83-122, 126-167, 169-207, 211-252, 253-295, and 298-333; these read MPSG…KTLE, GHTA…LIHR, GHSS…ECLK, GHTN…RMIK, HSMP…CLKT, DKSP…KVYT, GHTN…ILQR, and GHTD…KQDA.

Unlike WDR5A, does not interact with RBL or TRO.

The sequence is that of COMPASS-like H3K4 histone methylase component WDR5B from Arabidopsis thaliana (Mouse-ear cress).